Consider the following 703-residue polypeptide: Elongation factor G (703 aa).

The tr-type G domain occupies 8 to 290 (ARYRNIGICA…AVIEYLPAPT (283 aa)). Residues 17–24 (AHVDAGKT), 88–92 (DTPGH), and 142–145 (NKMD) contribute to the GTP site.

This sequence belongs to the TRAFAC class translation factor GTPase superfamily. Classic translation factor GTPase family. EF-G/EF-2 subfamily.

Its subcellular location is the cytoplasm. Its function is as follows. Catalyzes the GTP-dependent ribosomal translocation step during translation elongation. During this step, the ribosome changes from the pre-translocational (PRE) to the post-translocational (POST) state as the newly formed A-site-bound peptidyl-tRNA and P-site-bound deacylated tRNA move to the P and E sites, respectively. Catalyzes the coordinated movement of the two tRNA molecules, the mRNA and conformational changes in the ribosome. The sequence is that of Elongation factor G from Teredinibacter turnerae (strain ATCC 39867 / T7901).